The sequence spans 86 residues: Acyl-CoA-binding protein homolog (86 aa).

An ACB domain is found at 2 to 86 (VSEQFNAAAE…FVEGLVAKYA (85 aa)). Residues K14, 29-33 (YALFK), K51, K55, and Y74 each bind an acyl-CoA.

The protein belongs to the ACBP family. Expressed in larval and pupal brains. In adults, expressed in cardia, part of the Malpighian tubules, fat body, and gametes of both sexes.

Binds medium- and long-chain acyl-CoA esters with very high affinity and may function as an intracellular carrier of acyl-CoA esters. May be involved in energy metabolism in a manner that depends on the substrate used for energy production. Dbi and its metabolites are involved in the regulation of multiple biological processes. The sequence is that of Acyl-CoA-binding protein homolog from Drosophila melanogaster (Fruit fly).